Here is a 356-residue protein sequence, read N- to C-terminus: N-methyltransferase 4 (356 aa).

S-adenosyl-L-methionine-binding positions include 93-94 (QS), 128-136 (ILDIGCGFG), and 155-160 (TNSAEQ).

This sequence belongs to the CFA/CMAS family. In terms of tissue distribution, expressed in stems, roots, flower buds and leaves.

In terms of biological role, probable N-methyltransferase not involved in benzylisoquinoline metabolism. Shows no detectable activity with (s)-coclaurine, (R)- or (S)-reticuline, papaverine or (R,S)-tetrahydropapaverine. This is N-methyltransferase 4 (NMT4) from Papaver somniferum (Opium poppy).